A 147-amino-acid chain; its full sequence is Hemoglobin subunit gamma-2 (147 aa).

In terms of domain architecture, Globin spans 3–147; sequence HFTEEDKATI…VASALSSRYH (145 aa). A Phosphothreonine modification is found at Thr13. Phosphoserine occurs at positions 45, 51, and 53. Lys60 carries the N6-acetyllysine modification. Position 64 (His64) interacts with heme b. Lys83 is subject to N6-acetyllysine. Heme b is bound at residue His93. S-nitrosocysteine is present on Cys94. Phosphoserine is present on residues Ser140, Ser143, and Ser144.

This sequence belongs to the globin family. As to quaternary structure, heterotetramer of two alpha chains and two gamma chains in fetal hemoglobin (Hb F). As to expression, red blood cells.

Gamma chains make up the fetal hemoglobin F, in combination with alpha chains. The chain is Hemoglobin subunit gamma-2 (HBG2) from Pongo pygmaeus (Bornean orangutan).